A 360-amino-acid chain; its full sequence is Phosphoserine aminotransferase (360 aa).

Arg41 is an L-glutamate binding site. Trp101, Thr152, Asp172, and Gln195 together coordinate pyridoxal 5'-phosphate. Residue Lys196 is modified to N6-(pyridoxal phosphate)lysine. 237–238 (NT) contacts pyridoxal 5'-phosphate.

Belongs to the class-V pyridoxal-phosphate-dependent aminotransferase family. SerC subfamily. Homodimer. Pyridoxal 5'-phosphate is required as a cofactor.

It is found in the cytoplasm. The enzyme catalyses O-phospho-L-serine + 2-oxoglutarate = 3-phosphooxypyruvate + L-glutamate. It carries out the reaction 4-(phosphooxy)-L-threonine + 2-oxoglutarate = (R)-3-hydroxy-2-oxo-4-phosphooxybutanoate + L-glutamate. It participates in amino-acid biosynthesis; L-serine biosynthesis; L-serine from 3-phospho-D-glycerate: step 2/3. The protein operates within cofactor biosynthesis; pyridoxine 5'-phosphate biosynthesis; pyridoxine 5'-phosphate from D-erythrose 4-phosphate: step 3/5. Functionally, catalyzes the reversible conversion of 3-phosphohydroxypyruvate to phosphoserine and of 3-hydroxy-2-oxo-4-phosphonooxybutanoate to phosphohydroxythreonine. This chain is Phosphoserine aminotransferase, found in Burkholderia vietnamiensis (strain G4 / LMG 22486) (Burkholderia cepacia (strain R1808)).